We begin with the raw amino-acid sequence, 360 residues long: Phospho-N-acetylmuramoyl-pentapeptide-transferase (360 aa).

The next 10 helical transmembrane spans lie at 27–47 (GAVM…IEWL), 73–93 (TMGG…WADL), 98–118 (VWAV…DDYL), 134–154 (LVAQ…LGQG), 168–188 (LTFN…VGAS), 199–219 (GLAI…AYLV), 239–259 (LAVF…FNAP), 263–283 (VFMG…VSVV), 288–308 (IVLA…IVQV), and 337–357 (TVVI…LSTL).

This sequence belongs to the glycosyltransferase 4 family. MraY subfamily. It depends on Mg(2+) as a cofactor.

Its subcellular location is the cell inner membrane. The enzyme catalyses UDP-N-acetyl-alpha-D-muramoyl-L-alanyl-gamma-D-glutamyl-meso-2,6-diaminopimeloyl-D-alanyl-D-alanine + di-trans,octa-cis-undecaprenyl phosphate = di-trans,octa-cis-undecaprenyl diphospho-N-acetyl-alpha-D-muramoyl-L-alanyl-D-glutamyl-meso-2,6-diaminopimeloyl-D-alanyl-D-alanine + UMP. It functions in the pathway cell wall biogenesis; peptidoglycan biosynthesis. Its function is as follows. Catalyzes the initial step of the lipid cycle reactions in the biosynthesis of the cell wall peptidoglycan: transfers peptidoglycan precursor phospho-MurNAc-pentapeptide from UDP-MurNAc-pentapeptide onto the lipid carrier undecaprenyl phosphate, yielding undecaprenyl-pyrophosphoryl-MurNAc-pentapeptide, known as lipid I. In Rhodospirillum rubrum (strain ATCC 11170 / ATH 1.1.1 / DSM 467 / LMG 4362 / NCIMB 8255 / S1), this protein is Phospho-N-acetylmuramoyl-pentapeptide-transferase.